The following is a 623-amino-acid chain: V-type proton ATPase catalytic subunit A (623 aa).

252–259 lines the ATP pocket; that stretch reads GAFGCGKT.

It belongs to the ATPase alpha/beta chains family. As to quaternary structure, V-ATPase is a heteromultimeric enzyme composed of a peripheral catalytic V1 complex (main components: subunits A, B, C, D, E, and F) attached to an integral membrane V0 proton pore complex (main component: the proteolipid protein).

The catalysed reaction is ATP + H2O + 4 H(+)(in) = ADP + phosphate + 5 H(+)(out). Functionally, catalytic subunit of the peripheral V1 complex of vacuolar ATPase. V-ATPase vacuolar ATPase is responsible for acidifying a variety of intracellular compartments in eukaryotic cells. In Daucus carota (Wild carrot), this protein is V-type proton ATPase catalytic subunit A.